Consider the following 344-residue polypeptide: Dihydroorotase (344 aa).

Histidine 14 and histidine 16 together coordinate Zn(2+). Substrate-binding positions include 16–18 and asparagine 42; that span reads HLR. Positions 100, 137, and 175 each coordinate Zn(2+). Lysine 100 carries the N6-carboxylysine modification. Histidine 137 contributes to the substrate binding site. Residue leucine 220 coordinates substrate. Aspartate 248 is a Zn(2+) binding site. Aspartate 248 is a catalytic residue. Residues histidine 252 and alanine 264 each coordinate substrate.

The protein belongs to the metallo-dependent hydrolases superfamily. DHOase family. Class II DHOase subfamily. As to quaternary structure, homodimer. Zn(2+) is required as a cofactor.

The enzyme catalyses (S)-dihydroorotate + H2O = N-carbamoyl-L-aspartate + H(+). It functions in the pathway pyrimidine metabolism; UMP biosynthesis via de novo pathway; (S)-dihydroorotate from bicarbonate: step 3/3. Catalyzes the reversible cyclization of carbamoyl aspartate to dihydroorotate. This Cupriavidus metallidurans (strain ATCC 43123 / DSM 2839 / NBRC 102507 / CH34) (Ralstonia metallidurans) protein is Dihydroorotase.